Here is an 85-residue protein sequence, read N- to C-terminus: Antifungal protein (85 aa).

The N-terminal stretch at 1–18 is a signal peptide; the sequence is MVKLFVIVILALIAVAFG. 2 tandem repeats follow at residues 19–25 and 67–73. Residues 19–73 are 2 X 7 AA repeats of Q-H-G-H-G-G-Q; the sequence is QHGHGGQDQHGYGHGQQAVYGKGHEGHGVNNLGQDGHGQHGYAHGHSDQHGHGGQ. Residues 22–32 are compositionally biased toward gly residues; sequence HGGQDQHGYGH. The interval 22–85 is disordered; it reads HGGQDQHGYG…QHDGYKNRGY (64 aa). A compositionally biased stretch (basic and acidic residues) spans 63–85; the sequence is GHSDQHGHGGQHGQHDGYKNRGY.

Homodimer. In terms of processing, the N-terminus is blocked. In terms of tissue distribution, hemolymph.

Its function is as follows. This protein inhibits the growth of a variety of fungal species. The antifungal activity of this protein is enhanced by the presence of sarcotoxin IA. The chain is Antifungal protein from Sarcophaga peregrina (Flesh fly).